The primary structure comprises 213 residues: 2-dehydro-3-deoxy-phosphogluconate aldolase (213 aa).

Glu-45 acts as the Proton acceptor in catalysis. 3 residues coordinate pyruvate: Arg-49, Thr-73, and Lys-133. The Schiff-base intermediate with substrate role is filled by Lys-133.

Belongs to the KHG/KDPG aldolase family. Homotrimer.

The protein localises to the cytoplasm. It carries out the reaction 2-dehydro-3-deoxy-6-phospho-D-gluconate = D-glyceraldehyde 3-phosphate + pyruvate. The protein operates within carbohydrate acid metabolism; 2-dehydro-3-deoxy-D-gluconate degradation; D-glyceraldehyde 3-phosphate and pyruvate from 2-dehydro-3-deoxy-D-gluconate: step 2/2. Its function is as follows. Involved in the degradation of glucose via the Entner-Doudoroff pathway. Catalyzes the reversible, stereospecific retro-aldol cleavage of 2-keto-3-deoxy-6-phosphogluconate (KDPG) to pyruvate and D-glyceraldehyde-3-phosphate. This is 2-dehydro-3-deoxy-phosphogluconate aldolase (eda) from Dickeya dadantii (strain 3937) (Erwinia chrysanthemi (strain 3937)).